Here is a 76-residue protein sequence, read N- to C-terminus: Mu-scoloptoxin(15)-Ssm1a (76 aa).

Residues 1–23 form the signal peptide; it reads MEKKIIFLVFLVALLALPGFIST. An important for inhibition of KCNQ4 region spans residues 33-36; sequence KKRK. Cystine bridges form between cysteine 43–cysteine 69 and cysteine 47–cysteine 71.

Belongs to the scoloptoxin-15 family. As to expression, expressed by the venom gland.

It localises to the secreted. Its function is as follows. Blocks voltage-gated potassium channels Kv7.4/KCNQ4 (IC(50)=2.5 uM), Kv7.1/KCNQ1 (IC(50)=2.8 uM), Kv7.2/KCNQ2 (IC(50)=2.7 uM) and Kv7.5/KCNQ5 (IC(50)=2.7 uM). Targets the pore domain, in particular negatively charged residues 'Asp-266' and 'Asp-288', of KCNQ4 and probably other KCNQ channel family members where these residues are conserved. In vivo, shows vasoconstrictive activity resulting in acute hypertension when injected intravenously in mice. Also induces coronary vasospasms ultimately leading to heart failure. Induces seizures when injected into the hippocampus of mice. Decreases respiratory rate while increasing respiratory amplitude, probably by triggering a contraction of the bronchial ring. This Scolopendra mutilans (Chinese red-headed centipede) protein is Mu-scoloptoxin(15)-Ssm1a.